The primary structure comprises 828 residues: DNA gyrase subunit A (828 aa).

Residues 38-501 (LPDARDGLKP…SYESIDTEDL (464 aa)) form the Topo IIA-type catalytic domain. Tyr126 (O-(5'-phospho-DNA)-tyrosine intermediate) is an active-site residue. The short motif at 528–534 (QNRGGKG) is the GyrA-box element.

It belongs to the type II topoisomerase GyrA/ParC subunit family. In terms of assembly, heterotetramer, composed of two GyrA and two GyrB chains. In the heterotetramer, GyrA contains the active site tyrosine that forms a transient covalent intermediate with DNA, while GyrB binds cofactors and catalyzes ATP hydrolysis.

The protein resides in the cytoplasm. It carries out the reaction ATP-dependent breakage, passage and rejoining of double-stranded DNA.. A type II topoisomerase that negatively supercoils closed circular double-stranded (ds) DNA in an ATP-dependent manner to modulate DNA topology and maintain chromosomes in an underwound state. Negative supercoiling favors strand separation, and DNA replication, transcription, recombination and repair, all of which involve strand separation. Also able to catalyze the interconversion of other topological isomers of dsDNA rings, including catenanes and knotted rings. Type II topoisomerases break and join 2 DNA strands simultaneously in an ATP-dependent manner. The sequence is that of DNA gyrase subunit A from Helicobacter pylori (strain J99 / ATCC 700824) (Campylobacter pylori J99).